The sequence spans 147 residues: Protein MGF 100-3L (147 aa).

The protein belongs to the asfivirus MGF 100 family.

Its function is as follows. Plays a role in virus cell tropism, and may be required for efficient virus replication in macrophages. This is Protein MGF 100-3L from African swine fever virus (isolate Tick/Malawi/Lil 20-1/1983) (ASFV).